Reading from the N-terminus, the 101-residue chain is Small ribosomal subunit protein uS14 (101 aa).

Belongs to the universal ribosomal protein uS14 family. As to quaternary structure, part of the 30S ribosomal subunit. Contacts proteins S3 and S10.

In terms of biological role, binds 16S rRNA, required for the assembly of 30S particles and may also be responsible for determining the conformation of the 16S rRNA at the A site. The polypeptide is Small ribosomal subunit protein uS14 (Stutzerimonas stutzeri (strain A1501) (Pseudomonas stutzeri)).